A 231-amino-acid chain; its full sequence is Ninja-family protein AFP3 (231 aa).

Positions 83-96 are enriched in basic residues; that stretch reads AKRKRSEKQRKHKA. A disordered region spans residues 83 to 152; that stretch reads AKRKRSEKQR…SAQSQPENLG (70 aa). Over residues 130 to 152 the composition is skewed to polar residues; that stretch reads QATTNKSVETSPSSAQSQPENLG.

Belongs to the Ninja family. Forms a heterodimer with AFP2. Interacts with ABI5/DPBF1, DPBF2, AREB3/DPBF3, EEL/DPBF4, ABF1, ABF3/DPBF5 and ABF4/AREB2.

It localises to the nucleus. Its function is as follows. Acts as a negative regulator of abscisic acid (ABA) response and stress responses. This Arabidopsis thaliana (Mouse-ear cress) protein is Ninja-family protein AFP3 (AFP3).